Here is a 148-residue protein sequence, read N- to C-terminus: Large ribosomal subunit protein bL9 (148 aa).

This sequence belongs to the bacterial ribosomal protein bL9 family.

Binds to the 23S rRNA. The chain is Large ribosomal subunit protein bL9 from Streptomyces griseus subsp. griseus (strain JCM 4626 / CBS 651.72 / NBRC 13350 / KCC S-0626 / ISP 5235).